The sequence spans 157 residues: Protein Smg homolog (157 aa).

This sequence belongs to the Smg family.

The chain is Protein Smg homolog from Shewanella piezotolerans (strain WP3 / JCM 13877).